A 113-amino-acid polypeptide reads, in one-letter code: Cytochrome c (113 aa).

A1 is subject to N-acetylalanine. Heme c contacts are provided by C22, C25, and H26. Position 80 is an N6,N6,N6-trimethyllysine (K80). Heme c is bound at residue M88. K94 carries the N6,N6,N6-trimethyllysine modification.

Belongs to the cytochrome c family. In terms of processing, binds 1 heme c group covalently per subunit.

It localises to the mitochondrion intermembrane space. In terms of biological role, electron carrier protein. The oxidized form of the cytochrome c heme group can accept an electron from the heme group of the cytochrome c1 subunit of cytochrome reductase. Cytochrome c then transfers this electron to the cytochrome oxidase complex, the final protein carrier in the mitochondrial electron-transport chain. This Ginkgo biloba (Ginkgo) protein is Cytochrome c.